An 85-amino-acid chain; its full sequence is Prosialokinin (85 aa).

The signal sequence occupies residues 1-23 (MNMFITVQIVIVLVLAVLSEAAS). Residues 24–74 (LPTATERKDAMDEGPNQSDEPEGSVADPSTKDDDYSDSLKQDEKYYKVRLL) constitute a propeptide that is removed on maturation. The interval 26–61 (TATERKDAMDEGPNQSDEPEGSVADPSTKDDDYSDS) is disordered. Over residues 52-61 (STKDDDYSDS) the composition is skewed to basic and acidic residues. Position 84 is a methionine amide (Met84).

This sequence belongs to the tachykinin family. In terms of tissue distribution, expressed exclusively in the medial lobe of female salivary gland. Not detected in female carcass without head and salivary glands. Not detected in male tissues.

The protein localises to the secreted. In terms of biological role, vasodilatory peptide. Facilitates mosquito blood feeding on vertebrate host. Induces nitric oxide (NO) release in blood vessels through the activation of the nitric oxide synthase (NOS3). Enhances endothelial permeability and induces edema at the site of inoculation in the host. Induces host smooth muscle contraction. Down-regulates production of Th1 cytokines, such as IL2 and IFN-gamma (IFNG), in mouse splenocytes. Up-regulates production of Th2 cytokines, such as IL4 and IL10, in mouse splenocytes. Promotes recruitment of host leukocytes, especially neutrophils and CD8+ T cells, to the bite site. Modulates cytokine production by host macrophages. Modulates populations of monocytes/macrophages, plasmacytoid dendritic cells, B cells, CD4+ T cells, NK and NKT cells, shifting mammalian immunity towards Th2 responses. Its function is as follows. (Microbial infection) Promotes Semliki Forest virus infection in the host. Functionally, (Microbial infection) Does not affect Zika virus replication in the host. The chain is Prosialokinin from Aedes aegypti (Yellowfever mosquito).